Consider the following 898-residue polypeptide: Tight junction protein ZO-3 (898 aa).

One can recognise a PDZ 1 domain in the interval 11 to 93; that stretch reads TATLCRDPRR…LANITVKRPR (83 aa). The tract at residues 98–165 is disordered; that stretch reads PATKAGTSGR…SPGGNSEANG (68 aa). Phosphoserine is present on residues Ser-128, Ser-156, Ser-161, Ser-195, and Ser-313. In terms of domain architecture, PDZ 2 spans 187–264; it reads SVLVRRTESE…KLTLLVLRDR (78 aa). A disordered region spans residues 295–368; that stretch reads LSQAVPSHVP…QSAEDRGYSP (74 aa). Positions 312–349 are enriched in basic and acidic residues; that stretch reads RSLDSDGTDSPRDSPPLRRENSLDSRTISEPDAPRHSS. At Thr-319 the chain carries Phosphothreonine. Residues Ser-321 and Ser-360 each carry the phosphoserine modification. The 67-residue stretch at 369–435 folds into the PDZ 3 domain; it reads DSRVVRFHKG…LTREEAVQFL (67 aa). The SH3 domain maps to 464-538; it reads GDSFYIRTHF…PNQSRAEQLA (75 aa). The Guanylate kinase-like domain occupies 569 to 750; the sequence is LRRGAKKSTQ…WYQELKAVVR (182 aa). Phosphoserine is present on Ser-580. The interval 759 to 898 is disordered; it reads TAEDQLDNSS…GYDWGPATDL (140 aa). The span at 762–772 shows a compositional bias: acidic residues; the sequence is DQLDNSSEDNL. A compositionally biased stretch (low complexity) spans 780 to 790; the sequence is ADSSADLSCDS. The segment covering 796-814 has biased composition (acidic residues); sequence YETDGEGYTDGEGYTDVDE. Over residues 831–841 the composition is skewed to basic and acidic residues; sequence EEPRSPRDHGR. 3 positions are modified to phosphoserine: Ser-835, Ser-884, and Ser-885.

It belongs to the MAGUK family. As to quaternary structure, heterodimer with TJP1. Interacts with UBN1. Interacts with occludin OCLN and claudins. Interacts with PATJ. Interacts with FASLG. Interacts with CCND1. In terms of processing, phosphorylated.

Its subcellular location is the cell membrane. It is found in the cell junction. The protein resides in the tight junction. The protein localises to the nucleus. Functionally, TJP1, TJP2, and TJP3 are closely related scaffolding proteins that link tight junction (TJ) transmembrane proteins such as claudins, junctional adhesion molecules, and occludin to the actin cytoskeleton. The tight junction acts to limit movement of substances through the paracellular space and as a boundary between the compositionally distinct apical and basolateral plasma membrane domains of epithelial and endothelial cells. Binds and recruits PATJ to tight junctions where it connects and stabilizes apical and lateral components of tight junctions. Promotes cell-cycle progression through the sequestration of cyclin D1 (CCND1) at tight junctions during mitosis which prevents CCND1 degradation during M-phase and enables S-phase transition. With TJP1 and TJP2, participates in the junctional retention and stability of the transcription factor DBPA, but is not involved in its shuttling to the nucleus. Contrary to TJP2, TJP3 is dispensable for individual viability, embryonic development, epithelial differentiation, and the establishment of TJs, at least in the laboratory environment. The polypeptide is Tight junction protein ZO-3 (TJP3) (Canis lupus familiaris (Dog)).